Consider the following 151-residue polypeptide: Transcriptional regulator MraZ (151 aa).

2 SpoVT-AbrB domains span residues 5–52 (ANAV…PLDE) and 81–124 (AVDL…DEDA).

It belongs to the MraZ family. As to quaternary structure, forms oligomers.

It localises to the cytoplasm. Its subcellular location is the nucleoid. This Pseudomonas putida (strain ATCC 700007 / DSM 6899 / JCM 31910 / BCRC 17059 / LMG 24140 / F1) protein is Transcriptional regulator MraZ.